A 349-amino-acid polypeptide reads, in one-letter code: Transcriptional repressor protein KorB (349 aa).

2 disordered regions span residues 1–72 (MSAK…SPES) and 246–296 (RSHD…DKLK). The segment covering 25-40 (LGDLAGLLNEQPAANA) has biased composition (low complexity). Composition is skewed to basic and acidic residues over residues 246 to 256 (RSHDDGDRDPN) and 279 to 296 (DDAK…DKLK).

Belongs to the ParB family.

In terms of biological role, in conjunction with KorA, inhibits the transcription of the kilA, trfA and korAB operons. Is also involved in the negative control of the kilB operon. The polypeptide is Transcriptional repressor protein KorB (korB) (Escherichia coli).